The primary structure comprises 76 residues: Acyl carrier protein (76 aa).

In terms of domain architecture, Carrier spans 2 to 76 (SNIEERVIKV…QSAIDFVKSR (75 aa)). An O-(pantetheine 4'-phosphoryl)serine modification is found at S37.

Belongs to the acyl carrier protein (ACP) family. In terms of processing, 4'-phosphopantetheine is transferred from CoA to a specific serine of apo-ACP by AcpS. This modification is essential for activity because fatty acids are bound in thioester linkage to the sulfhydryl of the prosthetic group.

Its subcellular location is the cytoplasm. Its pathway is lipid metabolism; fatty acid biosynthesis. Carrier of the growing fatty acid chain in fatty acid biosynthesis. The polypeptide is Acyl carrier protein (Dichelobacter nodosus (strain VCS1703A)).